Reading from the N-terminus, the 431-residue chain is Tryptophan synthase beta chain (431 aa).

At K109 the chain carries N6-(pyridoxal phosphate)lysine.

Belongs to the TrpB family. In terms of assembly, tetramer of two alpha and two beta chains. Pyridoxal 5'-phosphate serves as cofactor.

It catalyses the reaction (1S,2R)-1-C-(indol-3-yl)glycerol 3-phosphate + L-serine = D-glyceraldehyde 3-phosphate + L-tryptophan + H2O. The protein operates within amino-acid biosynthesis; L-tryptophan biosynthesis; L-tryptophan from chorismate: step 5/5. Functionally, the beta subunit is responsible for the synthesis of L-tryptophan from indole and L-serine. This chain is Tryptophan synthase beta chain, found in Deinococcus radiodurans (strain ATCC 13939 / DSM 20539 / JCM 16871 / CCUG 27074 / LMG 4051 / NBRC 15346 / NCIMB 9279 / VKM B-1422 / R1).